Here is a 408-residue protein sequence, read N- to C-terminus: CinA-like protein (408 aa).

Belongs to the CinA family.

In Thermotoga neapolitana (strain ATCC 49049 / DSM 4359 / NBRC 107923 / NS-E), this protein is CinA-like protein.